Here is a 133-residue protein sequence, read N- to C-terminus: ATP synthase epsilon chain (133 aa).

It belongs to the ATPase epsilon chain family. As to quaternary structure, F-type ATPases have 2 components, CF(1) - the catalytic core - and CF(0) - the membrane proton channel. CF(1) has five subunits: alpha(3), beta(3), gamma(1), delta(1), epsilon(1). CF(0) has three main subunits: a, b and c.

The protein localises to the cell membrane. Functionally, produces ATP from ADP in the presence of a proton gradient across the membrane. The polypeptide is ATP synthase epsilon chain (atpC) (Mycoplasma genitalium (strain ATCC 33530 / DSM 19775 / NCTC 10195 / G37) (Mycoplasmoides genitalium)).